Consider the following 389-residue polypeptide: Phospho-N-acetylmuramoyl-pentapeptide-transferase (389 aa).

10 helical membrane passes run 25–45 (RAVM…PWVI), 73–93 (TMGG…WGDL), 97–117 (FIWI…VDDY), 135–155 (FWQS…VSEA), 190–210 (ISYP…IVGA), 222–242 (GLVI…AYVM), 258–278 (GAGE…AFLW), 286–306 (VFMG…VAVI), 311–331 (IVLF…MLQV), and 366–386 (QVVV…LSTL).

This sequence belongs to the glycosyltransferase 4 family. MraY subfamily. Mg(2+) serves as cofactor.

Its subcellular location is the cell inner membrane. The enzyme catalyses UDP-N-acetyl-alpha-D-muramoyl-L-alanyl-gamma-D-glutamyl-meso-2,6-diaminopimeloyl-D-alanyl-D-alanine + di-trans,octa-cis-undecaprenyl phosphate = di-trans,octa-cis-undecaprenyl diphospho-N-acetyl-alpha-D-muramoyl-L-alanyl-D-glutamyl-meso-2,6-diaminopimeloyl-D-alanyl-D-alanine + UMP. Its pathway is cell wall biogenesis; peptidoglycan biosynthesis. Catalyzes the initial step of the lipid cycle reactions in the biosynthesis of the cell wall peptidoglycan: transfers peptidoglycan precursor phospho-MurNAc-pentapeptide from UDP-MurNAc-pentapeptide onto the lipid carrier undecaprenyl phosphate, yielding undecaprenyl-pyrophosphoryl-MurNAc-pentapeptide, known as lipid I. In Burkholderia pseudomallei (strain 1106a), this protein is Phospho-N-acetylmuramoyl-pentapeptide-transferase.